Reading from the N-terminus, the 290-residue chain is Glycine--tRNA ligase alpha subunit (290 aa).

The protein belongs to the class-II aminoacyl-tRNA synthetase family. Tetramer of two alpha and two beta subunits.

It is found in the cytoplasm. It carries out the reaction tRNA(Gly) + glycine + ATP = glycyl-tRNA(Gly) + AMP + diphosphate. The sequence is that of Glycine--tRNA ligase alpha subunit from Prochlorococcus marinus (strain NATL1A).